A 137-amino-acid chain; its full sequence is MANQPSAEELKKKLSEMQFYVTQDRGTEPPFTGRLLHNKRDGVYHCLVCDMPLFHSHTKYDSGCGWPSFYQPVSEEAIRYIDDFSHGMQRVEIRCGNCDAHLGHVFPDGPQPTGERYCVNSASLAFSDEKNGDQLKG.

The MsrB domain occupies 7-129 (AEELKKKLSE…NSASLAFSDE (123 aa)). 4 residues coordinate Zn(2+): Cys-46, Cys-49, Cys-95, and Cys-98. Cys-118 serves as the catalytic Nucleophile.

This sequence belongs to the MsrB Met sulfoxide reductase family. Requires Zn(2+) as cofactor.

It carries out the reaction L-methionyl-[protein] + [thioredoxin]-disulfide + H2O = L-methionyl-(R)-S-oxide-[protein] + [thioredoxin]-dithiol. The polypeptide is Peptide methionine sulfoxide reductase MsrB (Salmonella agona (strain SL483)).